The following is a 319-amino-acid chain: Lambda-crystallin (319 aa).

Alanine 2 carries the post-translational modification N-acetylalanine. Residue serine 3 is modified to Phosphoserine. NAD(+) is bound by residues 16–17 (LV), aspartate 36, glutamate 97, and lysine 102. Residue serine 111 is modified to Phosphoserine.

The protein belongs to the 3-hydroxyacyl-CoA dehydrogenase family. Homodimer. As to expression, detected in eye lens, kidney, liver, heart, lung, brain and testis.

It is found in the cytoplasm. The enzyme catalyses L-gulonate + NAD(+) = 3-dehydro-L-gulonate + NADH + H(+). With respect to regulation, inhibited by malonate and by inorganic phosphate. Functions as a crystallin in the rabbit eye lens. Has high L-gulonate 3-dehydrogenase activity. It also exhibits low dehydrogenase activity toward L-3-hydroxybutyrate (HBA) and L-threonate. This is Lambda-crystallin (CRYL1) from Oryctolagus cuniculus (Rabbit).